The following is a 304-amino-acid chain: UTP--glucose-1-phosphate uridylyltransferase 1 (304 aa).

Belongs to the UDPGP type 2 family.

The catalysed reaction is alpha-D-glucose 1-phosphate + UTP + H(+) = UDP-alpha-D-glucose + diphosphate. Its pathway is carbohydrate metabolism; nucleotide-sugar metabolism. This is UTP--glucose-1-phosphate uridylyltransferase 1 (hasC1) from Streptococcus pyogenes serotype M3 (strain ATCC BAA-595 / MGAS315).